The chain runs to 285 residues: ATP synthase gamma chain (285 aa).

The protein belongs to the ATPase gamma chain family. As to quaternary structure, F-type ATPases have 2 components, CF(1) - the catalytic core - and CF(0) - the membrane proton channel. CF(1) has five subunits: alpha(3), beta(3), gamma(1), delta(1), epsilon(1). CF(0) has three main subunits: a, b and c.

The protein resides in the cell membrane. Its function is as follows. Produces ATP from ADP in the presence of a proton gradient across the membrane. The gamma chain is believed to be important in regulating ATPase activity and the flow of protons through the CF(0) complex. In Geobacillus sp. (strain WCH70), this protein is ATP synthase gamma chain.